Here is a 320-residue protein sequence, read N- to C-terminus: Transmembrane protein 41 homolog (320 aa).

Positions 20–72 are disordered; that stretch reads GRAKALQEHSPDQVATPLLPQVPPQEQQDLNPQQQQQQQQQQQATPQKQAMSA. The span at 43 to 68 shows a compositional bias: low complexity; sequence PQEQQDLNPQQQQQQQQQQQATPQKQ. The next 6 helical transmembrane spans lie at 83-103, 141-161, 173-195, 225-242, 245-265, and 289-309; these read VIVA…YAIF, VMFG…PGSL, FPIA…YTLS, LFNY…PNWF, LASP…FCGV, and FSWT…LPGL.

It belongs to the TMEM41 family. As to expression, in embryos, strongly expressed in the nervous system.

Its subcellular location is the membrane. Required in cholinergic neurons, but not in motor neurons, for normal neurotransmitter release by motor neurons. Involved in muscle growth. This chain is Transmembrane protein 41 homolog (stas), found in Drosophila melanogaster (Fruit fly).